The primary structure comprises 335 residues: Holliday junction branch migration complex subunit RuvB (335 aa).

Positions 1-181 (MDRIVEIEKY…FGMQFRLEFY (181 aa)) are large ATPase domain (RuvB-L). ATP contacts are provided by residues L20, R21, G62, K65, T66, T67, 128-130 (EDY), R171, Y181, and R218. Mg(2+) is bound at residue T66. Residues 182 to 252 (KDSELALILQ…RANEALNSLG (71 aa)) form a small ATPAse domain (RuvB-S) region. The interval 255–335 (ELGFDAMDLR…LNYEKTLFEE (81 aa)) is head domain (RuvB-H). Residues R309 and R314 each contribute to the DNA site.

Belongs to the RuvB family. As to quaternary structure, homohexamer. Forms an RuvA(8)-RuvB(12)-Holliday junction (HJ) complex. HJ DNA is sandwiched between 2 RuvA tetramers; dsDNA enters through RuvA and exits via RuvB. An RuvB hexamer assembles on each DNA strand where it exits the tetramer. Each RuvB hexamer is contacted by two RuvA subunits (via domain III) on 2 adjacent RuvB subunits; this complex drives branch migration. In the full resolvosome a probable DNA-RuvA(4)-RuvB(12)-RuvC(2) complex forms which resolves the HJ.

It is found in the cytoplasm. The enzyme catalyses ATP + H2O = ADP + phosphate + H(+). The RuvA-RuvB-RuvC complex processes Holliday junction (HJ) DNA during genetic recombination and DNA repair, while the RuvA-RuvB complex plays an important role in the rescue of blocked DNA replication forks via replication fork reversal (RFR). RuvA specifically binds to HJ cruciform DNA, conferring on it an open structure. The RuvB hexamer acts as an ATP-dependent pump, pulling dsDNA into and through the RuvAB complex. RuvB forms 2 homohexamers on either side of HJ DNA bound by 1 or 2 RuvA tetramers; 4 subunits per hexamer contact DNA at a time. Coordinated motions by a converter formed by DNA-disengaged RuvB subunits stimulates ATP hydrolysis and nucleotide exchange. Immobilization of the converter enables RuvB to convert the ATP-contained energy into a lever motion, pulling 2 nucleotides of DNA out of the RuvA tetramer per ATP hydrolyzed, thus driving DNA branch migration. The RuvB motors rotate together with the DNA substrate, which together with the progressing nucleotide cycle form the mechanistic basis for DNA recombination by continuous HJ branch migration. Branch migration allows RuvC to scan DNA until it finds its consensus sequence, where it cleaves and resolves cruciform DNA. This chain is Holliday junction branch migration complex subunit RuvB, found in Campylobacter jejuni (strain RM1221).